A 144-amino-acid chain; its full sequence is Snake venom vascular endothelial growth factor toxin VR-1 (144 aa).

Residues 1-24 form the signal peptide; that stretch reads MAAYLLAVAILFCIQGWPSGTVQG. Gln-25 carries the post-translational modification Pyrrolidone carboxylic acid. Cystine bridges form between Cys-38/Cys-80, Cys-69/Cys-115, and Cys-73/Cys-117. Over residues 120–134 the composition is skewed to basic and acidic residues; that stretch reads RWKQGEPEGPKEPRR. Positions 120–144 are disordered; that stretch reads RWKQGEPEGPKEPRRGGVRAKFPFD. A propeptide spanning residues 134–144 is cleaved from the precursor; it reads RGGVRAKFPFD.

Belongs to the PDGF/VEGF growth factor family. Snake venom VEGF subfamily. As to quaternary structure, homodimer; disulfide-linked. Interacts with VEGF receptor-2 (KDR) with high affinity, but not with VEGF receptor-1 (Flt-1), VEGF receptor-3 (FLT4), and neuropilin-1 (NRP1). As to expression, expressed by the venom gland.

It localises to the secreted. Functionally, snake venom VEGFs may contribute to venom dispersion and prey subjugation by inducing vascular permeability and hypotension. This protein induces angiogenesis probably through VEGF receptor (KDR/VEGFR-2) signaling, as well as drastic hypotension. The hypotension is mediated by nitric oxide, which is produced by VEGF-activated endothelium NO synthase. May also induce vascular permeability. In Daboia russelii (Russel's viper), this protein is Snake venom vascular endothelial growth factor toxin VR-1.